Reading from the N-terminus, the 359-residue chain is MAAVAGLVRGPLRQASGLLKRRFHRSAPAAVQLTVREAINQGMDEELERDEKVFLLGEEVAQYDGAYKVSRGLWKKYGDKRIIDTPISEMGFAGIAVGAAMAGLRPICEFMTFNFSMQAIDQVINSAAKTYYMSAGLQPVPIVFRGPNGASAGVAAQHSQCFAAWYGHCPGLKVVSPWNSEDAKGLIKSAIRDDNPVVMLENELMYGVAFELPTEAQSKDFLIPIGKAKIERQGTHITVVAHSRPVGHCLEAAAVLSKEGIECEVINLRTIRPMDIEAIEASVMKTNHLVTVEGGWPQFGVGAEICARIMEGPAFNFLDAPAVRVTGADVPMPYAKILEDNSIPQVKDIIFAIKKTLNI.

A mitochondrion-targeting transit peptide spans 1 to 30 (MAAVAGLVRGPLRQASGLLKRRFHRSAPAA). The residue at position 67 (Tyr-67) is a Phosphotyrosine. Position 89 (Glu-89) interacts with thiamine diphosphate. The K(+) site is built by Ile-142, Ala-190, Ile-191, Asp-193, and Asn-195. An N6-acetyllysine modification is found at Lys-354.

As to quaternary structure, heterotetramer of two PDHA1 and two PDHB subunits. The heterotetramer interacts with DLAT, and is part of the multimeric pyruvate dehydrogenase complex that contains multiple copies of pyruvate dehydrogenase (E1), dihydrolipoamide acetyltransferase (DLAT, E2) and lipoamide dehydrogenase (DLD, E3). These subunits are bound to an inner core composed of about 48 DLAT and 12 PDHX molecules. Interacts with DLAT. Thiamine diphosphate is required as a cofactor.

Its subcellular location is the mitochondrion matrix. It catalyses the reaction N(6)-[(R)-lipoyl]-L-lysyl-[protein] + pyruvate + H(+) = N(6)-[(R)-S(8)-acetyldihydrolipoyl]-L-lysyl-[protein] + CO2. The pyruvate dehydrogenase complex catalyzes the overall conversion of pyruvate to acetyl-CoA and CO(2), and thereby links the glycolytic pathway to the tricarboxylic cycle. The polypeptide is Pyruvate dehydrogenase E1 component subunit beta, mitochondrial (Pdhb) (Rattus norvegicus (Rat)).